Here is a 324-residue protein sequence, read N- to C-terminus: Adenine deaminase (324 aa).

Residues His-11, His-13, and His-189 each contribute to the Zn(2+) site. Glu-192 functions as the Proton donor in the catalytic mechanism. Asp-270 is a binding site for Zn(2+). Asp-271 contributes to the substrate binding site.

The protein belongs to the metallo-dependent hydrolases superfamily. Adenosine and AMP deaminases family. Adenine deaminase type 2 subfamily. Zn(2+) serves as cofactor.

The catalysed reaction is adenine + H2O + H(+) = hypoxanthine + NH4(+). Functionally, catalyzes the hydrolytic deamination of adenine to hypoxanthine. Plays an important role in the purine salvage pathway and in nitrogen catabolism. This is Adenine deaminase from Sinorhizobium medicae (strain WSM419) (Ensifer medicae).